The chain runs to 461 residues: Argininosuccinate lyase (461 aa).

The protein belongs to the lyase 1 family. Argininosuccinate lyase subfamily.

It localises to the cytoplasm. It catalyses the reaction 2-(N(omega)-L-arginino)succinate = fumarate + L-arginine. It participates in amino-acid biosynthesis; L-arginine biosynthesis; L-arginine from L-ornithine and carbamoyl phosphate: step 3/3. In Symbiobacterium thermophilum (strain DSM 24528 / JCM 14929 / IAM 14863 / T), this protein is Argininosuccinate lyase.